The sequence spans 112 residues: UPF0342 protein SPT_0901 (112 aa).

This sequence belongs to the UPF0342 family.

This chain is UPF0342 protein SPT_0901, found in Streptococcus pneumoniae (strain Taiwan19F-14).